Here is a 306-residue protein sequence, read N- to C-terminus: C-type lectin domain family 10 member A (306 aa).

Topologically, residues 1–37 (MTMAYENFQNLGSEEKNQEAGKAPPQSFLCNILSWTH) are cytoplasmic. A helical; Signal-anchor for type II membrane protein transmembrane segment spans residues 38–58 (LLLFSLGLSLLLLVVISVIGS). The Extracellular portion of the chain corresponds to 59 to 306 (QNSQLRRDLE…VCEMKLAKDS (248 aa)). 2 N-linked (GlcNAc...) asparagine glycosylation sites follow: Asn-76 and Asn-168. The C-type lectin domain occupies 174-300 (CCPLHWMEHE…QRPYRWVCEM (127 aa)). 3 cysteine pairs are disulfide-bonded: Cys-175-Cys-186, Cys-203-Cys-298, and Cys-276-Cys-290.

As to quaternary structure, homooligomer.

The protein resides in the membrane. In terms of biological role, recognizes terminal galactose and N-acetylgalactosamine units. The polypeptide is C-type lectin domain family 10 member A (Clec10a) (Rattus norvegicus (Rat)).